A 132-amino-acid chain; its full sequence is UPF0102 protein LI0223 (132 aa).

It belongs to the UPF0102 family.

In Lawsonia intracellularis (strain PHE/MN1-00), this protein is UPF0102 protein LI0223.